A 313-amino-acid polypeptide reads, in one-letter code: Ribosomal RNA small subunit methyltransferase H (313 aa).

Residues 34–36, Asp-54, Phe-81, Asp-102, and Gln-109 contribute to the S-adenosyl-L-methionine site; that span reads GGH. The tract at residues 289 to 313 is disordered; sequence IAGPEETDRNPRARSAKLRAAEKLG.

Belongs to the methyltransferase superfamily. RsmH family.

It is found in the cytoplasm. The enzyme catalyses cytidine(1402) in 16S rRNA + S-adenosyl-L-methionine = N(4)-methylcytidine(1402) in 16S rRNA + S-adenosyl-L-homocysteine + H(+). Its function is as follows. Specifically methylates the N4 position of cytidine in position 1402 (C1402) of 16S rRNA. The sequence is that of Ribosomal RNA small subunit methyltransferase H from Trichlorobacter lovleyi (strain ATCC BAA-1151 / DSM 17278 / SZ) (Geobacter lovleyi).